The following is a 597-amino-acid chain: MASTFSATSSMGSSLAPPSNRLSSFVSISSSSFGRTQSIAQRKARFPKIYAAKQLHFNKDGTAIKKLQAGVNKLADLVGVTLGPKGRNVVLESKYGSPRIVNDGVTVAREVELEDPVENIGAKLVRQAASKTNDLAGDGTTTSVVLAQGLIAEGVKVVAAGANPVLITRGIEKTTKALVAELKKMSKEVEDSELADVAAVSAGNNYEVGNMIAEAMAKVGRKGVVTLEEGKSAENSLYVVEGMQFDRGYISPYFVTDSEKMCAEYENCKLFLVDKKITNARDIISILEDAIKGGYPLLIIAEDIEQEPLATLVVNKLRGTIKVAALKAPGFGERKSQYLDDIAALTGATVIREEVGLQLEKVGPEVLGNAGKVVLTKDTTTIVGDGSTEEVVKKRVEQIKNLIEAAEQDYEKEKLNERIAKLSGGVAVIQVGAQTETELKEKKLRVEDALNATKAAVEEGIVVGGGCTLLRLASKVDAIKETLANDEEKVGADIVKKALSYPLKLIAKNAGVNGSVVSEKVLSSDNPKHGYNAATGKYEDLMAAGIIDPTKVVRCCLEHASSVAKTFLMSDCVVVEIKEPESAAPAGNPMDNSGYGF.

A disordered region spans residues 1–20 (MASTFSATSSMGSSLAPPSN). A chloroplast-targeting transit peptide spans 1-29 (MASTFSATSSMGSSLAPPSNRLSSFVSIS). Ser97 and Ser474 each carry phosphoserine. Residues 387 to 489 (STEEVVKKRV…KETLANDEEK (103 aa)) are a coiled coil.

Belongs to the chaperonin (HSP60) family. As to quaternary structure, part of the Cpn60 complex composed of 7 alpha and 7 beta subunits. Can also form a complex composed of 14 beta subunits only. Both complexes show ATPase activity. The Cpn60 complex interacts with the Cpn10 complex.

The protein resides in the plastid. It localises to the chloroplast. Involved in protein assisted folding. This Arabidopsis thaliana (Mouse-ear cress) protein is Chaperonin 60 subunit beta 3, chloroplastic (CPN60B3).